The sequence spans 475 residues: Ribulose bisphosphate carboxylase large chain (475 aa).

Positions M1–S2 are excised as a propeptide. P3 is subject to N-acetylproline. The residue at position 14 (K14) is an N6,N6,N6-trimethyllysine. 2 residues coordinate substrate: N123 and T173. The active-site Proton acceptor is the K175. K177 contributes to the substrate binding site. K201, D203, and E204 together coordinate Mg(2+). An N6-carboxylysine modification is found at K201. The Proton acceptor role is filled by H294. Substrate contacts are provided by R295, H327, and S379.

Belongs to the RuBisCO large chain family. Type I subfamily. As to quaternary structure, heterohexadecamer of 8 large chains and 8 small chains; disulfide-linked. The disulfide link is formed within the large subunit homodimers. Mg(2+) is required as a cofactor. The disulfide bond which can form in the large chain dimeric partners within the hexadecamer appears to be associated with oxidative stress and protein turnover.

It localises to the plastid. The protein localises to the chloroplast. It carries out the reaction 2 (2R)-3-phosphoglycerate + 2 H(+) = D-ribulose 1,5-bisphosphate + CO2 + H2O. The enzyme catalyses D-ribulose 1,5-bisphosphate + O2 = 2-phosphoglycolate + (2R)-3-phosphoglycerate + 2 H(+). In terms of biological role, ruBisCO catalyzes two reactions: the carboxylation of D-ribulose 1,5-bisphosphate, the primary event in carbon dioxide fixation, as well as the oxidative fragmentation of the pentose substrate in the photorespiration process. Both reactions occur simultaneously and in competition at the same active site. This chain is Ribulose bisphosphate carboxylase large chain, found in Afrocarpus gracilior (African fern pine).